The chain runs to 295 residues: G1/S-specific cyclin-D1 (295 aa).

One can recognise a Cyclin N-terminal domain in the interval 28-152; that stretch reads LRAMLKAEET…LLVNKLKWNL (125 aa). The interval 262-295 is disordered; it reads AQQNMDPKAAEEEEEEEEEVDLACTPTDVRDVDI. A Glycyl lysine isopeptide (Lys-Gly) (interchain with G-Cter in ubiquitin) cross-link involves residue Lys-269. The segment covering 272-282 has biased composition (acidic residues); it reads EEEEEEEEEVD. At Thr-286 the chain carries Phosphothreonine.

This sequence belongs to the cyclin family. Cyclin D subfamily. In terms of assembly, interacts with either CDK4 or CDK6 protein kinase to form a serine/threonine kinase holoenzyme complex. The cyclin subunit imparts substrate specificity to the complex. Component of the ternary complex CCND1/CDK4/CDKN1B required for nuclear translocation and modulation of CDK4-mediated kinase activity. Interacts directly with CDKN1B. Can form similar complexes with either CDKN1A or CDKN2A. Interacts with UHRF2; the interaction ubiquitinates CCND1 and appears to occur independently of phosphorylation. Interacts with USP2. Interacts (via cyclin N-terminal domain) with INSM1 (via N-terminal region); the interaction competes with the binding of CCND1 to CDK4 during cell cycle progression and inhibits CDK4 activity. Interacts with CDK4; the interaction is prevented with the binding of CCND1 to INSM1 during cell cycle progression. In terms of processing, phosphorylation at Thr-286 by MAP kinases is required for ubiquitination and degradation by the DCX(AMBRA1) complex. It also plays an essential role for recognition by the FBXO31 component of SCF (SKP1-cullin-F-box) protein ligase complex following DNA damage. Ubiquitinated at Lys-269 by the DCX(AMBRA1) complex during the transition from G1 to S cell phase, leading to its degradation: ubiquitination is dependent on Thr-286 phosphorylation. The DCX(AMBRA1) complex represents the major regulator of CCND1 stability during the G1/S transition. Also ubiquitinated by the SCF(FBXO4) and Cul7-RING(FBXW8) ubiquitin-protein ligase complexes. Following DNA damage it is ubiquitinated by the SCF(FBXO31) protein ligase complex. SCF(FBXO31) ubiquitination is dependent on Thr-286 phosphorylation. Ubiquitinated also by UHRF2 apparently in a phosphorylation-independent manner. Ubiquitination leads to its degradation and G1 arrest. Deubiquitinated by USP2; leading to its stabilization.

It localises to the nucleus. Its subcellular location is the cytoplasm. The protein resides in the nucleus membrane. In terms of biological role, regulatory component of the cyclin D1-CDK4 (DC) complex that phosphorylates and inhibits members of the retinoblastoma (RB) protein family including RB1 and regulates the cell-cycle during G(1)/S transition. Phosphorylation of RB1 allows dissociation of the transcription factor E2F from the RB/E2F complex and the subsequent transcription of E2F target genes which are responsible for the progression through the G(1) phase. Hypophosphorylates RB1 in early G(1) phase. Cyclin D-CDK4 complexes are major integrators of various mitogenenic and antimitogenic signals. Also a substrate for SMAD3, phosphorylating SMAD3 in a cell-cycle-dependent manner and repressing its transcriptional activity. Component of the ternary complex, cyclin D1/CDK4/CDKN1B, required for nuclear translocation and activity of the cyclin D-CDK4 complex. Exhibits transcriptional corepressor activity with INSM1 on the NEUROD1 and INS promoters in a cell cycle-independent manner. The polypeptide is G1/S-specific cyclin-D1 (Homo sapiens (Human)).